A 148-amino-acid polypeptide reads, in one-letter code: Azurin (148 aa).

The first 18 residues, 1–18 (MRNQLLFALAFIPTIAAA), serve as a signal peptide directing secretion. The 130-residue stretch at 19–148 (ASNCEVNVSA…MMRGTVKLVD (130 aa)) folds into the Plastocyanin-like domain. Cys-22 and Cys-45 are oxidised to a cystine. Residues His-65, Cys-131, His-136, and Met-140 each coordinate Cu cation.

The protein localises to the periplasm. Its pathway is one-carbon metabolism; methylamine degradation. In terms of biological role, probable electron acceptor for methylamine dehydrogenase. This is Azurin (azu) from Methylobacillus flagellatus (strain ATCC 51484 / DSM 6875 / VKM B-1610 / KT).